The primary structure comprises 457 residues: Guanine nucleotide-binding protein subunit alpha homolog (457 aa).

The region spanning arginine 131 to glutamine 457 is the G-alpha domain. The interval lysine 134–threonine 147 is G1 motif. GTP contacts are provided by residues glycine 139–serine 146, leucine 274–threonine 280, aspartate 299–glutamine 303, asparagine 369–aspartate 372, and alanine 429. Positions 146 and 280 each coordinate Mg(2+). The tract at residues aspartate 272–threonine 280 is G2 motif. The segment at phenylalanine 295–arginine 304 is G3 motif. Residues isoleucine 365–aspartate 372 are G4 motif. Residues threonine 427–threonine 432 form a G5 motif region.

The protein belongs to the G-alpha family. G(12) subfamily. In terms of assembly, g proteins are composed of 3 units; alpha, beta and gamma. The alpha chain contains the guanine nucleotide binding site. As to expression, in ovary, expressed in nurse cells and oocyte. In early embryos, distributed uniformly. At the extended germband stage, accumulates in the mesoderm.

The protein localises to the cytoplasm. Its function is as follows. May play a role in a signal transduction pathway used during gastrulation. Required specifically for the ventral furrow and posterior midgut invaginations, where it is necessary for coordinating cell shape changes. Functionally, guanine nucleotide-binding proteins (G proteins) are involved as modulators or transducers in various transmembrane signaling systems. The sequence is that of Guanine nucleotide-binding protein subunit alpha homolog (cta) from Drosophila melanogaster (Fruit fly).